We begin with the raw amino-acid sequence, 355 residues long: tRNA-specific 2-thiouridylase MnmA 1 (355 aa).

L6–S13 provides a ligand contact to ATP. The tract at residues N92–D94 is interaction with target base in tRNA. C97 functions as the Nucleophile in the catalytic mechanism. C97 and C192 are joined by a disulfide. ATP is bound at residue G120. Residues K142–Q144 are interaction with tRNA. C192 functions as the Cysteine persulfide intermediate in the catalytic mechanism.

It belongs to the MnmA/TRMU family.

It localises to the cytoplasm. It catalyses the reaction S-sulfanyl-L-cysteinyl-[protein] + uridine(34) in tRNA + AH2 + ATP = 2-thiouridine(34) in tRNA + L-cysteinyl-[protein] + A + AMP + diphosphate + H(+). In terms of biological role, catalyzes the 2-thiolation of uridine at the wobble position (U34) of tRNA, leading to the formation of s(2)U34. This is tRNA-specific 2-thiouridylase MnmA 1 from Bacteroides thetaiotaomicron (strain ATCC 29148 / DSM 2079 / JCM 5827 / CCUG 10774 / NCTC 10582 / VPI-5482 / E50).